The sequence spans 186 residues: Nicotinamide-nucleotide adenylyltransferase (186 aa).

This sequence belongs to the archaeal NMN adenylyltransferase family.

The protein localises to the cytoplasm. It catalyses the reaction beta-nicotinamide D-ribonucleotide + ATP + H(+) = diphosphate + NAD(+). Its pathway is cofactor biosynthesis; NAD(+) biosynthesis; NAD(+) from nicotinamide D-ribonucleotide: step 1/1. The protein is Nicotinamide-nucleotide adenylyltransferase of Pyrococcus abyssi (strain GE5 / Orsay).